A 100-amino-acid chain; its full sequence is Large ribosomal subunit protein uL23 (100 aa).

This sequence belongs to the universal ribosomal protein uL23 family. Part of the 50S ribosomal subunit. Contacts protein L29, and trigger factor when it is bound to the ribosome.

Its function is as follows. One of the early assembly proteins it binds 23S rRNA. One of the proteins that surrounds the polypeptide exit tunnel on the outside of the ribosome. Forms the main docking site for trigger factor binding to the ribosome. This is Large ribosomal subunit protein uL23 from Mycolicibacterium smegmatis (strain ATCC 700084 / mc(2)155) (Mycobacterium smegmatis).